The chain runs to 616 residues: Proline--tRNA ligase (616 aa).

The protein belongs to the class-II aminoacyl-tRNA synthetase family. ProS type 1 subfamily. Homodimer.

The protein localises to the cytoplasm. It carries out the reaction tRNA(Pro) + L-proline + ATP = L-prolyl-tRNA(Pro) + AMP + diphosphate. Its function is as follows. Catalyzes the attachment of proline to tRNA(Pro) in a two-step reaction: proline is first activated by ATP to form Pro-AMP and then transferred to the acceptor end of tRNA(Pro). As ProRS can inadvertently accommodate and process non-cognate amino acids such as alanine and cysteine, to avoid such errors it has two additional distinct editing activities against alanine. One activity is designated as 'pretransfer' editing and involves the tRNA(Pro)-independent hydrolysis of activated Ala-AMP. The other activity is designated 'posttransfer' editing and involves deacylation of mischarged Ala-tRNA(Pro). The misacylated Cys-tRNA(Pro) is not edited by ProRS. This chain is Proline--tRNA ligase, found in Lactococcus lactis subsp. lactis (strain IL1403) (Streptococcus lactis).